The following is a 503-amino-acid chain: MTTINKNEFLLEMTGISKEFPGVKALDKVNLKVRPHSIHALMGENGAGKSTLLKCLFGIYEKNEGDIVFLGKSINFSSSKEALEAGVSMVHQELNQVLQRTVMDNIWLGRYPTKGFFVDQKKMYEETKKVFEELDIDIDPNVKVATLSVSQMQMLEIAKAFSYDAKIVIMDEPTSSLTEKEVNHLFKIIKKLKEKGCGIVYISHKMEEIFEICDEITILRDGIWVDTRPLEGLTMDQIIGMMVGRELTQRFPEKTNTPKETILAVKNLTALNQPSVNDVSFELRKGEILGIAGLVGAKRTDIVETLFGIRERSSGDIILHGKHLKNKDAHEAINNGFALVTEERRSTGIYSNLDITFNSLVANVEQYKEGFGLLSNRKMKSDTQWVIDAMSVKTPSHKTMIGSLSGGNQQKIIIGRWLLTGPEILMLDEPTRGIDVGAKFEIYQLILELANKDKGIIIISSEMPELLGITDRILVMSNGRAAGIVETKNTTQNEILSLASRYL.

ABC transporter domains lie at 11–246 and 257–503; these read LEMT…VGRE and TPKE…SRYL. ATP is bound at residue 43–50; it reads GENGAGKS.

The protein belongs to the ABC transporter superfamily. Galactose/methyl galactoside importer (TC 3.A.1.2.3) family. The complex is composed of one ATP-binding protein (MglA), two transmembrane proteins (MglC) and a solute-binding protein (MglB).

It is found in the cell inner membrane. It catalyses the reaction D-galactose(out) + ATP + H2O = D-galactose(in) + ADP + phosphate + H(+). The catalysed reaction is methyl beta-D-galactoside(out) + ATP + H2O = methyl beta-D-galactoside(in) + ADP + phosphate + H(+). Functionally, part of the ABC transporter complex MglABC involved in galactose/methyl galactoside import. Responsible for energy coupling to the transport system. This Photobacterium profundum (strain SS9) protein is Galactose/methyl galactoside import ATP-binding protein MglA 2.